Reading from the N-terminus, the 471-residue chain is Coagulation factor IX (471 aa).

Positions 1–28 are cleaved as a signal peptide; the sequence is MKHLNTVMAESPALITIFLLGYLLSTEC. A propeptide spanning residues 29–46 is cleaved from the precursor; the sequence is AVFLDRENATKILTRPKR. Residues tyrosine 47, asparagine 48, glutamate 53, glutamate 54, glutamate 61, glutamate 63, glutamate 66, glutamate 67, glutamate 72, glutamate 73, and glutamate 76 each contribute to the Ca(2+) site. Residues 47 to 92 enclose the Gla domain; sequence YNSGKLEEFVRGNLERECIEERCSFEEAREVFENTEKTTEFWKQYV. Residues glutamate 53, glutamate 54, glutamate 61, glutamate 63, glutamate 66, glutamate 67, glutamate 72, glutamate 73, glutamate 76, glutamate 79, and glutamate 82 each carry the 4-carboxyglutamate modification. Glutamate 61 contributes to the Mg(2+) binding site. The cysteines at positions 64 and 69 are disulfide-linked. Glutamate 66 contributes to the Mg(2+) binding site. Residue glutamate 72 coordinates Mg(2+). Glutamate 76 is a binding site for Mg(2+). Glutamate 82 contacts Ca(2+). Position 82 (glutamate 82) interacts with Mg(2+). Threonine 85 is a glycosylation site (O-linked (GalNAc...) threonine). Positions 86, 93, 94, and 96 each coordinate Ca(2+). Glutamate 86 carries the post-translational modification 4-carboxyglutamate. Glutamate 86 is a binding site for Mg(2+). The region spanning 93-129 is the EGF-like 1; calcium-binding domain; sequence DGDQCESNPCLNGGICKDDISSYECWCQVGFEGRNCE. Cystine bridges form between cysteine 97–cysteine 108, cysteine 102–cysteine 117, cysteine 119–cysteine 128, cysteine 134–cysteine 145, cysteine 141–cysteine 155, cysteine 157–cysteine 170, cysteine 178–cysteine 345, cysteine 262–cysteine 278, cysteine 392–cysteine 406, and cysteine 417–cysteine 445. Serine 99 carries an O-linked (Glc...) serine glycan. Aspartate 110 and aspartate 111 together coordinate Ca(2+). Aspartate 110 is subject to (3R)-3-hydroxyaspartate. Serine 114 is modified (phosphoserine). The 42-residue stretch at 130-171 folds into the EGF-like 2 domain; the sequence is LDATCNIKNGRCKQFCKNSPDNKVICSCTEGYQLAEDQKSCE. Residues 193–236 constitute a propeptide, activation peptide; it reads AETVFSNMDYENSTEAVFIQDDITDGAILNNVTESSESLNDFTR. Tyrosine 202 carries the sulfotyrosine modification. Residue asparagine 204 is glycosylated (N-linked (GlcNAc...) asparagine). Residue serine 205 is modified to Phosphoserine. Position 206 is a phosphothreonine; alternate (threonine 206). Threonine 206 is a glycosylation site (O-linked (GalNAc...) threonine; alternate). The N-linked (GlcNAc...) asparagine glycan is linked to asparagine 223. Threonine 225 and threonine 235 each carry an O-linked (GalNAc...) threonine glycan. The region spanning 237 to 469 is the Peptidase S1 domain; it reads VVGGENAKPG…YVNWIKEKTK (233 aa). Histidine 277 serves as the catalytic Charge relay system. Ca(2+) contacts are provided by glutamate 291, asparagine 293, glutamate 298, and glutamate 301. Aspartate 325 functions as the Charge relay system in the catalytic mechanism. Serine 421 (charge relay system) is an active-site residue.

The protein belongs to the peptidase S1 family. In terms of assembly, heterodimer of a light chain and a heavy chain; disulfide-linked. Interacts (inactive and activated) with F11 (activated) in calcium-dependent manner. Interacts with SERPINC1. Post-translationally, activated by factor XIa, which excises the activation peptide. The propeptide can also be removed by snake venom protease. Activated by coagulation factor VIIa-tissue factor (F7-F3) complex in calcium-dependent manner. The iron and 2-oxoglutarate dependent 3-hydroxylation of aspartate and asparagine is (R) stereospecific within EGF domains. In terms of processing, predominantly O-glucosylated at Ser-99 by POGLUT1 in vitro. Detected in liver.

The protein localises to the secreted. It catalyses the reaction Selective cleavage of Arg-|-Ile bond in factor X to form factor Xa.. Factor IX is a vitamin K-dependent plasma protein that participates in the intrinsic pathway of blood coagulation by converting factor X to its active form in the presence of Ca(2+) ions, phospholipids, and factor VIIIa. The protein is Coagulation factor IX (F9) of Mus musculus (Mouse).